The following is a 67-amino-acid chain: DNA-directed RNA polymerase subunit omega (67 aa).

It belongs to the RNA polymerase subunit omega family. In terms of assembly, the RNAP catalytic core consists of 2 alpha, 1 beta, 1 beta' and 1 omega subunit. When a sigma factor is associated with the core the holoenzyme is formed, which can initiate transcription.

The catalysed reaction is RNA(n) + a ribonucleoside 5'-triphosphate = RNA(n+1) + diphosphate. Functionally, promotes RNA polymerase assembly. Latches the N- and C-terminal regions of the beta' subunit thereby facilitating its interaction with the beta and alpha subunits. The protein is DNA-directed RNA polymerase subunit omega of Bordetella petrii (strain ATCC BAA-461 / DSM 12804 / CCUG 43448).